The primary structure comprises 101 residues: Small ribosomal subunit protein bS18c (101 aa).

Residues 1 to 19 show a composition bias toward basic residues; it reads MNKSKRPFTKSKRSFRRRL. The interval 1–23 is disordered; that stretch reads MNKSKRPFTKSKRSFRRRLPPIQ.

Belongs to the bacterial ribosomal protein bS18 family. As to quaternary structure, part of the 30S ribosomal subunit.

It is found in the plastid. The protein resides in the chloroplast. The polypeptide is Small ribosomal subunit protein bS18c (Lobularia maritima (Sweet alyssum)).